A 354-amino-acid chain; its full sequence is Rhodopsin (354 aa).

Residues 1 to 36 (MNGTEGENFYVPMSNKTGVVRNPFEYPQYYLADHWM) lie on the Extracellular side of the membrane. N-linked (GlcNAc...) asparagine glycosylation is found at Asn-2 and Asn-15. The chain crosses the membrane as a helical span at residues 37 to 61 (FAVLAAYMFFLIITGFPVNFLTLFV). Residues 62–73 (TIQNKKLRQPLN) are Cytoplasmic-facing. A helical membrane pass occupies residues 74-96 (YILLNLAVANLFMVFGGFTTTLI). At 97–110 (TSMNGYFVFGSTGC) the chain is on the extracellular side. Cys-110 and Cys-187 are oxidised to a cystine. Residues 111-133 (NLEGFFATLGGEISLWSLVVLAI) traverse the membrane as a helical segment. The short motif at 134–136 (ERY) is the 'Ionic lock' involved in activated form stabilization element. Residues 134–152 (ERYVVVCKPMSNFRFGSQH) lie on the Cytoplasmic side of the membrane. Residues 153 to 173 (AIAGVSLTWVMAMACAAPPLV) form a helical membrane-spanning segment. Residues 174 to 202 (GWSRYIPEGLQCSCGIDYYTPKPEINNVS) are Extracellular-facing. The N-linked (GlcNAc...) asparagine glycan is linked to Asn-200. A helical membrane pass occupies residues 203–224 (FVIYMFVVHFSIPLTIIFFCYG). Over 225–252 (RLVCTVKAAAAQQQESETTQRAEREVTR) the chain is Cytoplasmic. Residues 253-274 (MVVIMVIGFLICWLPYASVALY) traverse the membrane as a helical segment. Over 275–286 (IFNNQGSEFGPV) the chain is Extracellular. Residues 287-308 (FMTIPSFFAKSSALYNPLIYIL) form a helical membrane-spanning segment. Residue Lys-296 is modified to N6-(retinylidene)lysine. The Cytoplasmic portion of the chain corresponds to 309-354 (MNKQFRNCMITTLCCGKNPFEEEESTSASASKTEASSVSSSQVSPA). S-palmitoyl cysteine attachment occurs at residues Cys-322 and Cys-323. The disordered stretch occupies residues 333–354 (STSASASKTEASSVSSSQVSPA). The segment covering 334–354 (TSASASKTEASSVSSSQVSPA) has biased composition (low complexity).

It belongs to the G-protein coupled receptor 1 family. Opsin subfamily. In terms of processing, phosphorylated on some or all of the serine and threonine residues present in the C-terminal region. Post-translationally, contains one covalently linked retinal chromophore.

It is found in the membrane. It localises to the cell projection. The protein localises to the cilium. Its subcellular location is the photoreceptor outer segment. In terms of biological role, photoreceptor required for image-forming vision at low light intensity. While most salt water fish species use retinal as chromophore, most freshwater fish use 3-dehydroretinal, or a mixture of retinal and 3-dehydroretinal. Light-induced isomerization of 11-cis to all-trans retinal triggers a conformational change that activates signaling via G-proteins. Subsequent receptor phosphorylation mediates displacement of the bound G-protein alpha subunit by arrestin and terminates signaling. This chain is Rhodopsin (rho), found in Galeus melastomus (Blackmouth catshark).